The following is a 435-amino-acid chain: Homoserine dehydrogenase (435 aa).

Residues T13, V14, R43, and K105 each contribute to the NADPH site. An NAD(+)-binding site is contributed by V14. NADP(+)-binding residues include V14, R43, and K105. Na(+) contacts are provided by E129, V132, G134, and I136. The active-site Proton donor is the K204. 2 disordered regions span residues 255-274 and 377-402; these read ARGVELARAPDPDPRETPDR and RCDDSEGNRRQAERRRSGRHHHPDHV. 2 stretches are compositionally biased toward basic and acidic residues: residues 262–274 and 377–391; these read RAPDPDPRETPDR and RCDDSEGNRRQAERR.

It belongs to the homoserine dehydrogenase family. A metal cation serves as cofactor.

The catalysed reaction is L-homoserine + NADP(+) = L-aspartate 4-semialdehyde + NADPH + H(+). It catalyses the reaction L-homoserine + NAD(+) = L-aspartate 4-semialdehyde + NADH + H(+). The protein operates within amino-acid biosynthesis; L-methionine biosynthesis via de novo pathway; L-homoserine from L-aspartate: step 3/3. It participates in amino-acid biosynthesis; L-threonine biosynthesis; L-threonine from L-aspartate: step 3/5. Its function is as follows. Catalyzes the conversion of L-aspartate-beta-semialdehyde (L-Asa) to L-homoserine (L-Hse), the third step in the biosynthesis of threonine and methionine from aspartate. The polypeptide is Homoserine dehydrogenase (hom) (Methylobacillus glycogenes).